The sequence spans 268 residues: Shikimate dehydrogenase (NADP(+)) (268 aa).

Shikimate is bound by residues 13–15 and threonine 60; that span reads SLS. The active-site Proton acceptor is the lysine 64. Residue glutamate 76 participates in NADP(+) binding. The shikimate site is built by asparagine 85 and aspartate 100. NADP(+) contacts are provided by residues 124–128, 148–153, and isoleucine 209; these read GAGGA and NRTMAR. Tyrosine 211 is a shikimate binding site. Glycine 232 is a binding site for NADP(+).

Belongs to the shikimate dehydrogenase family. As to quaternary structure, homodimer.

The catalysed reaction is shikimate + NADP(+) = 3-dehydroshikimate + NADPH + H(+). It functions in the pathway metabolic intermediate biosynthesis; chorismate biosynthesis; chorismate from D-erythrose 4-phosphate and phosphoenolpyruvate: step 4/7. Functionally, involved in the biosynthesis of the chorismate, which leads to the biosynthesis of aromatic amino acids. Catalyzes the reversible NADPH linked reduction of 3-dehydroshikimate (DHSA) to yield shikimate (SA). This Staphylococcus aureus (strain MSSA476) protein is Shikimate dehydrogenase (NADP(+)).